We begin with the raw amino-acid sequence, 221 residues long: Intraflagellar transport-associated protein (221 aa).

S59 carries the post-translational modification Phosphoserine.

Interacts with IFT122; the interaction associates IFTAP with IFT-A complex.

Functionally, seems to play a role in ciliary BBSome localization, maybe through interaction with IFT-A complex. The polypeptide is Intraflagellar transport-associated protein (Homo sapiens (Human)).